Consider the following 82-residue polypeptide: MAEVSSAPVRRPFHRRRKTCPFSGANAPRIDYKDVRLLQRYISERGKIVPSRITAVSQKKQRELAQAIKRARFLGLLPYVVS.

It belongs to the bacterial ribosomal protein bS18 family. Part of the 30S ribosomal subunit. Forms a tight heterodimer with protein bS6.

Its function is as follows. Binds as a heterodimer with protein bS6 to the central domain of the 16S rRNA, where it helps stabilize the platform of the 30S subunit. This Sinorhizobium fredii (strain NBRC 101917 / NGR234) protein is Small ribosomal subunit protein bS18.